A 436-amino-acid chain; its full sequence is D-amino acid dehydrogenase (436 aa).

FAD is bound at residue 3-17; the sequence is ILILGSGVIGVTSAW.

It belongs to the DadA oxidoreductase family. FAD serves as cofactor.

The enzyme catalyses a D-alpha-amino acid + A + H2O = a 2-oxocarboxylate + AH2 + NH4(+). Its pathway is amino-acid degradation; D-alanine degradation; NH(3) and pyruvate from D-alanine: step 1/1. Its function is as follows. Oxidative deamination of D-amino acids. The protein is D-amino acid dehydrogenase of Photorhabdus laumondii subsp. laumondii (strain DSM 15139 / CIP 105565 / TT01) (Photorhabdus luminescens subsp. laumondii).